A 308-amino-acid chain; its full sequence is Oxygen-dependent coproporphyrinogen-III oxidase (308 aa).

S100 provides a ligand contact to substrate. H104 and H114 together coordinate a divalent metal cation. H114 (proton donor) is an active-site residue. 116 to 118 contacts substrate; sequence NFR. A divalent metal cation-binding residues include H153 and H183. Residues 248–283 form an important for dimerization region; that stretch reads YVEFNLVFDRGTIFGLQSGGRTESILSSMPPMATWK. 266 to 268 is a binding site for substrate; sequence GGR.

It belongs to the aerobic coproporphyrinogen-III oxidase family. As to quaternary structure, homodimer. The cofactor is a divalent metal cation.

Its subcellular location is the cytoplasm. The enzyme catalyses coproporphyrinogen III + O2 + 2 H(+) = protoporphyrinogen IX + 2 CO2 + 2 H2O. The protein operates within porphyrin-containing compound metabolism; protoporphyrin-IX biosynthesis; protoporphyrinogen-IX from coproporphyrinogen-III (O2 route): step 1/1. In terms of biological role, involved in the heme biosynthesis. Catalyzes the aerobic oxidative decarboxylation of propionate groups of rings A and B of coproporphyrinogen-III to yield the vinyl groups in protoporphyrinogen-IX. The polypeptide is Oxygen-dependent coproporphyrinogen-III oxidase (Francisella tularensis subsp. holarctica (strain FTNF002-00 / FTA)).